A 481-amino-acid chain; its full sequence is Glucan endo-1,3-beta-glucosidase 8 (481 aa).

Residues 1–33 (MSNLLALVVGFVIVIGHLGILVNGLGVNWGTMA) form the signal peptide. 2 N-linked (GlcNAc...) asparagine glycosylation sites follow: N99 and N110. E119 (proton donor) is an active-site residue. 2 N-linked (GlcNAc...) asparagine glycosylation sites follow: N126 and N131. The Nucleophile role is filled by E265. A disulfide bond links C367 and C428. N409 and N440 each carry an N-linked (GlcNAc...) asparagine glycan. Residue S455 is the site of GPI-anchor amidated serine attachment. Positions 456–481 (SASSFSCSSYSLVVLIVWFLLSGMMF) are cleaved as a propeptide — removed in mature form.

This sequence belongs to the glycosyl hydrolase 17 family. Post-translationally, contains two additional disulfide bonds.

The protein resides in the secreted. The protein localises to the cell wall. It localises to the cell membrane. The catalysed reaction is Hydrolysis of (1-&gt;3)-beta-D-glucosidic linkages in (1-&gt;3)-beta-D-glucans.. This chain is Glucan endo-1,3-beta-glucosidase 8, found in Arabidopsis thaliana (Mouse-ear cress).